The primary structure comprises 413 residues: GTPase HflX (413 aa).

In terms of domain architecture, Hflx-type G spans 200-386; that stretch reads VRVALVGYTN…KVYETVREIH (187 aa). GTP is bound by residues 206 to 213, 231 to 235, 252 to 255, 318 to 321, and 364 to 366; these read GYTNVGKS, FATLD, DTVG, NKID, and SAT. The Mg(2+) site is built by Ser213 and Thr233.

This sequence belongs to the TRAFAC class OBG-HflX-like GTPase superfamily. HflX GTPase family. Monomer. Associates with the 50S ribosomal subunit. It depends on Mg(2+) as a cofactor.

The protein localises to the cytoplasm. Functionally, GTPase that associates with the 50S ribosomal subunit and may have a role during protein synthesis or ribosome biogenesis. In Flavobacterium psychrophilum (strain ATCC 49511 / DSM 21280 / CIP 103535 / JIP02/86), this protein is GTPase HflX.